Reading from the N-terminus, the 238-residue chain is RNA-binding protein pno1 (238 aa).

Residues 162–211 (QSRAIGRLAGKGGRTKFTIENVTKTRIVLADSKIHILGSYQNIQLARRAI) enclose the KH domain.

It belongs to the PNO1 family.

It is found in the nucleus. It localises to the nucleolus. This Drosophila pseudoobscura pseudoobscura (Fruit fly) protein is RNA-binding protein pno1 (l(1)G0004).